The chain runs to 308 residues: Probable manganese-dependent inorganic pyrophosphatase (308 aa).

Mn(2+) contacts are provided by H9, D13, D15, D75, H97, and D149.

The protein belongs to the PPase class C family. Requires Mn(2+) as cofactor.

It is found in the cytoplasm. The enzyme catalyses diphosphate + H2O = 2 phosphate + H(+). This chain is Probable manganese-dependent inorganic pyrophosphatase, found in Listeria innocua serovar 6a (strain ATCC BAA-680 / CLIP 11262).